Consider the following 65-residue polypeptide: Large ribosomal subunit protein bL35 (65 aa).

It belongs to the bacterial ribosomal protein bL35 family.

The protein is Large ribosomal subunit protein bL35 of Heliobacterium modesticaldum (strain ATCC 51547 / Ice1).